The chain runs to 474 residues: Pyruvate kinase (474 aa).

Substrate is bound at residue arginine 32. K(+) is bound by residues asparagine 34, serine 36, and aspartate 66. 34 to 37 contributes to the ATP binding site; that stretch reads NFSH. ATP-binding residues include arginine 73 and lysine 155. Glutamate 221 contributes to the Mg(2+) binding site. The substrate site is built by glycine 244, aspartate 245, and threonine 277. Aspartate 245 lines the Mg(2+) pocket.

This sequence belongs to the pyruvate kinase family. As to quaternary structure, homotetramer. Requires Mg(2+) as cofactor. K(+) serves as cofactor.

The enzyme catalyses pyruvate + ATP = phosphoenolpyruvate + ADP + H(+). The protein operates within carbohydrate degradation; glycolysis; pyruvate from D-glyceraldehyde 3-phosphate: step 5/5. The sequence is that of Pyruvate kinase (pykF) from Clostridium perfringens (strain 13 / Type A).